The chain runs to 377 residues: D-alanine--D-alanine ligase (377 aa).

Positions 140–349 (KELLTVNGIR…NAKLVDMLID (210 aa)) constitute an ATP-grasp domain. 170 to 225 (VAELGNIVFVKAANQGSSVGISRVTNAEEYTEALSDSFQYDYKVLIEEAVNGAREL) provides a ligand contact to ATP. Mg(2+)-binding residues include Asp-303, Glu-316, and Asn-318.

Belongs to the D-alanine--D-alanine ligase family. Requires Mg(2+) as cofactor. The cofactor is Mn(2+).

The protein localises to the cytoplasm. The enzyme catalyses 2 D-alanine + ATP = D-alanyl-D-alanine + ADP + phosphate + H(+). It participates in cell wall biogenesis; peptidoglycan biosynthesis. Its function is as follows. Cell wall formation. The chain is D-alanine--D-alanine ligase from Leuconostoc mesenteroides.